The chain runs to 103 residues: uncharacterized protein (103 aa).

This is an uncharacterized protein from Haemophilus influenzae (strain ATCC 51907 / DSM 11121 / KW20 / Rd).